Consider the following 94-residue polypeptide: uncharacterized protein (94 aa).

The protein belongs to the phage portal family. HK97 subfamily.

This is an uncharacterized protein from Rickettsia conorii (strain ATCC VR-613 / Malish 7).